The chain runs to 188 residues: Elongation factor P (188 aa).

Position 34 is an N6-(3,6-diaminohexanoyl)-5-hydroxylysine (lysine 34).

It belongs to the elongation factor P family. Post-translationally, may be beta-lysylated on the epsilon-amino group of Lys-34 by the combined action of EpmA and EpmB, and then hydroxylated on the C5 position of the same residue by EpmC (if this protein is present). Lysylation is critical for the stimulatory effect of EF-P on peptide-bond formation. The lysylation moiety may extend toward the peptidyltransferase center and stabilize the terminal 3-CCA end of the tRNA. Hydroxylation of the C5 position on Lys-34 may allow additional potential stabilizing hydrogen-bond interactions with the P-tRNA.

It localises to the cytoplasm. It participates in protein biosynthesis; polypeptide chain elongation. Functionally, involved in peptide bond synthesis. Alleviates ribosome stalling that occurs when 3 or more consecutive Pro residues or the sequence PPG is present in a protein, possibly by augmenting the peptidyl transferase activity of the ribosome. Modification of Lys-34 is required for alleviation. This chain is Elongation factor P, found in Enterobacter sp. (strain 638).